The following is a 308-amino-acid chain: GTPase Era (308 aa).

The region spanning 14-181 is the Era-type G domain; that stretch reads RCGFVALIGA…RRALAAAMPE (168 aa). Residues 22–29 are G1; that stretch reads GAPNVGKS. Residue 22–29 participates in GTP binding; that stretch reads GAPNVGKS. The segment at 48–52 is G2; that stretch reads QTTRA. The tract at residues 69-72 is G3; the sequence is DTPG. Residues 69–73 and 131–134 contribute to the GTP site; these read DTPGI and NKID. Residues 131–134 are G4; that stretch reads NKID. A G5 region spans residues 160-162; sequence VAA. Residues 212–289 form the KH type-2 domain; sequence LHQELPYQST…HLFLFVKVRD (78 aa).

Belongs to the TRAFAC class TrmE-Era-EngA-EngB-Septin-like GTPase superfamily. Era GTPase family. In terms of assembly, monomer.

Its subcellular location is the cytoplasm. The protein localises to the cell inner membrane. An essential GTPase that binds both GDP and GTP, with rapid nucleotide exchange. Plays a role in 16S rRNA processing and 30S ribosomal subunit biogenesis and possibly also in cell cycle regulation and energy metabolism. The chain is GTPase Era from Afipia carboxidovorans (strain ATCC 49405 / DSM 1227 / KCTC 32145 / OM5) (Oligotropha carboxidovorans).